A 69-amino-acid polypeptide reads, in one-letter code: Beta-defensin 114 (69 aa).

An N-terminal signal peptide occupies residues 1–26; the sequence is MRIFYYLHFLCYVTFILPATCTLVNA. Cystine bridges form between cysteine 29-cysteine 57, cysteine 36-cysteine 50, and cysteine 40-cysteine 58.

The protein belongs to the beta-defensin family. In terms of tissue distribution, expressed in epididymis, predominantly in the caput (at protein level).

It localises to the secreted. Functionally, has a salt-sensitive antimicrobial activity against Gram-negative bacteria, including E.coli, Gram-positive, including S.aureus, and fungi, including C.albicans. Binds to and neutralizes bacterial lipopolysaccharides (LPS), abolishing TNF production by macrophages challenged with LPS. Rescues the LPS-induced reduction of sperm motility in vitro and may protect from LPS-induced lethality. The chain is Beta-defensin 114 (DEFB114) from Homo sapiens (Human).